We begin with the raw amino-acid sequence, 159 residues long: MSDEEHQFESKADAGASKTYPQQAGTIRKGGHIVIKNRACKVVEVSTSKTGKHGHAKCHFVAIDIFNGKKLEDIVPSSHNCDVPHVNRTDYQLIDISEDGFVSLLTENGNTKDDLKLPTDDALLTQIKDGFGEGKDLVVSVMSAMGEEQICALKDIGPK.

A compositionally biased stretch (basic and acidic residues) spans methionine 1–alanine 12. The disordered stretch occupies residues methionine 1 to glutamine 23. A Hypusine modification is found at lysine 52.

It belongs to the eIF-5A family. In terms of processing, lys-52 undergoes hypusination, a unique post-translational modification that consists in the addition of a butylamino group from spermidine to lysine side chain, leading to the formation of the unusual amino acid hypusine. eIF-5As are the only known proteins to undergo this modification, which is essential for their function.

Its function is as follows. Translation factor that promotes translation elongation and termination, particularly upon ribosome stalling at specific amino acid sequence contexts. Binds between the exit (E) and peptidyl (P) site of the ribosome and promotes rescue of stalled ribosome: specifically required for efficient translation of polyproline-containing peptides as well as other motifs that stall the ribosome. Acts as a ribosome quality control (RQC) cofactor by joining the RQC complex to facilitate peptidyl transfer during CAT tailing step. The protein is Eukaryotic translation initiation factor 5A (EIFSV1) of Senecio vernalis (Spring groundsel).